The following is a 165-amino-acid chain: Large ribosomal subunit protein uL11 (165 aa).

S38 is subject to Phosphoserine. A Glycyl lysine isopeptide (Lys-Gly) (interchain with G-Cter in SUMO2) cross-link involves residue K40. K48 participates in a covalent cross-link: Glycyl lysine isopeptide (Lys-Gly) (interchain with G-Cter in ubiquitin). Residue K54 is modified to N6-acetyllysine. A Glycyl lysine isopeptide (Lys-Gly) (interchain with G-Cter in ubiquitin) cross-link involves residue K83. S165 carries the phosphoserine modification.

The protein belongs to the universal ribosomal protein uL11 family. In terms of assembly, component of the large ribosomal subunit. Mature ribosomes consist of a small (40S) and a large (60S) subunit. The 40S subunit contains about 33 different proteins and 1 molecule of RNA (18S). The 60S subunit contains about 49 different proteins and 3 molecules of RNA (28S, 5.8S and 5S). Post-translationally, ubiquitinated at Lys-48 and Lys-83 by RNF14 and RNF25 in response to ribosome collisions (ribosome stalling).

Its subcellular location is the cytoplasm. Its function is as follows. Component of the large ribosomal subunit. The ribosome is a large ribonucleoprotein complex responsible for the synthesis of proteins in the cell. Binds directly to 26S ribosomal RNA. This chain is Large ribosomal subunit protein uL11 (RPL12), found in Chinchilla lanigera (Long-tailed chinchilla).